The chain runs to 598 residues: Elongation factor 4 2 (598 aa).

Residues 2 to 184 enclose the tr-type G domain; the sequence is KHIRNFCIIA…GIVKNLPAPK (183 aa). GTP contacts are provided by residues 14–19 and 131–134; these read DHGKST and NKID.

This sequence belongs to the TRAFAC class translation factor GTPase superfamily. Classic translation factor GTPase family. LepA subfamily.

The protein resides in the cell inner membrane. It carries out the reaction GTP + H2O = GDP + phosphate + H(+). Required for accurate and efficient protein synthesis under certain stress conditions. May act as a fidelity factor of the translation reaction, by catalyzing a one-codon backward translocation of tRNAs on improperly translocated ribosomes. Back-translocation proceeds from a post-translocation (POST) complex to a pre-translocation (PRE) complex, thus giving elongation factor G a second chance to translocate the tRNAs correctly. Binds to ribosomes in a GTP-dependent manner. The chain is Elongation factor 4 2 from Rhodopirellula baltica (strain DSM 10527 / NCIMB 13988 / SH1).